The following is a 351-amino-acid chain: Glycerol-1-phosphate dehydrogenase [NAD(P)+] (351 aa).

NAD(+) is bound by residues 97–101 and 119–122; these read GTVID and TSPS. D124 contacts substrate. S128 serves as a coordination point for NAD(+). D171 lines the substrate pocket. 2 residues coordinate Zn(2+): D171 and H251. H255 serves as a coordination point for substrate. H267 contributes to the Zn(2+) binding site.

This sequence belongs to the glycerol-1-phosphate dehydrogenase family. In terms of assembly, homodimer. It depends on Zn(2+) as a cofactor.

The protein resides in the cytoplasm. The catalysed reaction is sn-glycerol 1-phosphate + NAD(+) = dihydroxyacetone phosphate + NADH + H(+). The enzyme catalyses sn-glycerol 1-phosphate + NADP(+) = dihydroxyacetone phosphate + NADPH + H(+). Its pathway is membrane lipid metabolism; glycerophospholipid metabolism. Its function is as follows. Catalyzes the NAD(P)H-dependent reduction of dihydroxyacetonephosphate (DHAP or glycerone phosphate) to glycerol 1-phosphate (G1P). The G1P thus generated is used as the glycerophosphate backbone of phospholipids in the cellular membranes of Archaea. In Sulfolobus acidocaldarius (strain ATCC 33909 / DSM 639 / JCM 8929 / NBRC 15157 / NCIMB 11770), this protein is Glycerol-1-phosphate dehydrogenase [NAD(P)+].